Reading from the N-terminus, the 409-residue chain is N-carbamoyl-L-amino acid amidohydrolase (409 aa).

A divalent metal cation-binding residues include His-79, Asp-90, Glu-125, and His-189. An N-carbamoyl-L-alpha-amino acid contacts are provided by Gln-192, His-225, Asn-273, Arg-286, and Ala-355. Positions 208–325 (GIAGLIWVKF…TTERLQEMAP (118 aa)) are involved in dimerization. A divalent metal cation is bound at residue His-380.

The protein belongs to the peptidase M20 family. Homodimer. The cofactor is Mn(2+). Ni(2+) serves as cofactor. Requires Co(2+) as cofactor. It depends on Fe(2+) as a cofactor.

It catalyses the reaction an N-carbamoyl-L-alpha-amino acid + H2O + 2 H(+) = an L-alpha-amino acid + NH4(+) + CO2. It carries out the reaction N-carbamoyl-L-methionine + H2O + 2 H(+) = L-methionine + NH4(+) + CO2. The enzyme catalyses N-acetyl-L-methionine + H2O = L-methionine + acetate. The catalysed reaction is N-carbamoyl-L-alanine + H2O + 2 H(+) = L-alanine + NH4(+) + CO2. It catalyses the reaction N-carbamoyl-L-glutamate + H2O + 2 H(+) = L-glutamate + NH4(+) + CO2. It carries out the reaction N-carbamoylglycine + H2O + 2 H(+) = glycine + NH4(+) + CO2. The enzyme catalyses N-carbamoyl-L-leucine + H2O + 2 H(+) = L-leucine + NH4(+) + CO2. Its function is as follows. Catalyzes the hydrolysis of aliphatic N-carbamoyl-L-alpha-amino acids to free L-alpha-amino acids. Is strictly L-specific since it is inactive toward N-carbamoyl-D-alpha-amino acids. Is not able to use aromatic N-carbamoyl-L-alpha-amino acids like N-carbamoyl-L-tryptophan and N-carbamoyl-L-phenylalanine as substrates, but is also able to hydrolyze N-acetyl-L-methionine. The chain is N-carbamoyl-L-amino acid amidohydrolase from Geobacillus stearothermophilus (Bacillus stearothermophilus).